Reading from the N-terminus, the 276-residue chain is 4-hydroxy-tetrahydrodipicolinate reductase (276 aa).

Residues 10–15 (GALGKM), Asp-36, and 109–111 (GTT) each bind NAD(+). Residue His-165 is the Proton donor/acceptor of the active site. Residue His-166 participates in (S)-2,3,4,5-tetrahydrodipicolinate binding. Lys-169 acts as the Proton donor in catalysis. 175 to 176 (GT) is a (S)-2,3,4,5-tetrahydrodipicolinate binding site.

The protein belongs to the DapB family.

It is found in the cytoplasm. It catalyses the reaction (S)-2,3,4,5-tetrahydrodipicolinate + NAD(+) + H2O = (2S,4S)-4-hydroxy-2,3,4,5-tetrahydrodipicolinate + NADH + H(+). The catalysed reaction is (S)-2,3,4,5-tetrahydrodipicolinate + NADP(+) + H2O = (2S,4S)-4-hydroxy-2,3,4,5-tetrahydrodipicolinate + NADPH + H(+). The protein operates within amino-acid biosynthesis; L-lysine biosynthesis via DAP pathway; (S)-tetrahydrodipicolinate from L-aspartate: step 4/4. In terms of biological role, catalyzes the conversion of 4-hydroxy-tetrahydrodipicolinate (HTPA) to tetrahydrodipicolinate. The polypeptide is 4-hydroxy-tetrahydrodipicolinate reductase (Prochlorococcus marinus (strain SARG / CCMP1375 / SS120)).